The primary structure comprises 338 residues: UDP-3-O-acylglucosamine N-acyltransferase (338 aa).

Catalysis depends on histidine 243, which acts as the Proton acceptor.

This sequence belongs to the transferase hexapeptide repeat family. LpxD subfamily. As to quaternary structure, homotrimer.

It catalyses the reaction a UDP-3-O-[(3R)-3-hydroxyacyl]-alpha-D-glucosamine + a (3R)-hydroxyacyl-[ACP] = a UDP-2-N,3-O-bis[(3R)-3-hydroxyacyl]-alpha-D-glucosamine + holo-[ACP] + H(+). The protein operates within bacterial outer membrane biogenesis; LPS lipid A biosynthesis. Catalyzes the N-acylation of UDP-3-O-acylglucosamine using 3-hydroxyacyl-ACP as the acyl donor. Is involved in the biosynthesis of lipid A, a phosphorylated glycolipid that anchors the lipopolysaccharide to the outer membrane of the cell. This Amoebophilus asiaticus (strain 5a2) protein is UDP-3-O-acylglucosamine N-acyltransferase.